The chain runs to 642 residues: Threonine--tRNA ligase (642 aa).

Residues 1–61 enclose the TGS domain; the sequence is MPVITLPDGS…ENDAQLSIIT (61 aa). Residues 243-534 are catalytic; the sequence is DHRKIGKQLD…LTEEFAGFFP (292 aa). Lysine 286 carries the N6-acetyllysine modification. Zn(2+) is bound by residues cysteine 334, histidine 385, and histidine 511.

The protein belongs to the class-II aminoacyl-tRNA synthetase family. In terms of assembly, homodimer. The cofactor is Zn(2+).

It localises to the cytoplasm. The catalysed reaction is tRNA(Thr) + L-threonine + ATP = L-threonyl-tRNA(Thr) + AMP + diphosphate + H(+). Functionally, catalyzes the attachment of threonine to tRNA(Thr) in a two-step reaction: L-threonine is first activated by ATP to form Thr-AMP and then transferred to the acceptor end of tRNA(Thr). Also edits incorrectly charged L-seryl-tRNA(Thr). This is Threonine--tRNA ligase from Escherichia coli O157:H7.